Here is a 161-residue protein sequence, read N- to C-terminus: Phosphopantetheine adenylyltransferase (161 aa).

S9 contacts substrate. ATP is bound by residues 9–10 (SF) and H17. Substrate is bound by residues K41, T74, and R88. ATP contacts are provided by residues 89-91 (GVR), E99, and 124-130 (NSFVASS).

It belongs to the bacterial CoaD family. In terms of assembly, homohexamer. Requires Mg(2+) as cofactor.

The protein resides in the cytoplasm. It carries out the reaction (R)-4'-phosphopantetheine + ATP + H(+) = 3'-dephospho-CoA + diphosphate. The protein operates within cofactor biosynthesis; coenzyme A biosynthesis; CoA from (R)-pantothenate: step 4/5. Reversibly transfers an adenylyl group from ATP to 4'-phosphopantetheine, yielding dephospho-CoA (dPCoA) and pyrophosphate. This chain is Phosphopantetheine adenylyltransferase, found in Lactobacillus acidophilus (strain ATCC 700396 / NCK56 / N2 / NCFM).